The sequence spans 364 residues: A-type ATP synthase subunit C (364 aa).

The protein belongs to the V-ATPase V0D/AC39 subunit family. As to quaternary structure, has multiple subunits with at least A(3), B(3), C, D, E, F, H, I and proteolipid K(x).

It localises to the cell membrane. Functionally, component of the A-type ATP synthase that produces ATP from ADP in the presence of a proton gradient across the membrane. The polypeptide is A-type ATP synthase subunit C (Desulfurococcus sp. (strain SY)).